Consider the following 93-residue polypeptide: UPF0297 protein PEPE_1262 (93 aa).

The protein belongs to the UPF0297 family.

The sequence is that of UPF0297 protein PEPE_1262 from Pediococcus pentosaceus (strain ATCC 25745 / CCUG 21536 / LMG 10740 / 183-1w).